The primary structure comprises 140 residues: Nucleoside diphosphate kinase (140 aa).

ATP is bound by residues Lys-11, Phe-59, Arg-87, Thr-93, Arg-104, and Asn-114. His-117 serves as the catalytic Pros-phosphohistidine intermediate.

The protein belongs to the NDK family. Homotetramer. Mg(2+) is required as a cofactor.

The protein localises to the cytoplasm. The catalysed reaction is a 2'-deoxyribonucleoside 5'-diphosphate + ATP = a 2'-deoxyribonucleoside 5'-triphosphate + ADP. It carries out the reaction a ribonucleoside 5'-diphosphate + ATP = a ribonucleoside 5'-triphosphate + ADP. Major role in the synthesis of nucleoside triphosphates other than ATP. The ATP gamma phosphate is transferred to the NDP beta phosphate via a ping-pong mechanism, using a phosphorylated active-site intermediate. This Rhodopseudomonas palustris (strain BisB18) protein is Nucleoside diphosphate kinase.